Here is a 309-residue protein sequence, read N- to C-terminus: Olfactory receptor 7A40 (309 aa).

The Extracellular segment spans residues 1 to 26 (MELKNDTQISKFILLGISEDPLWQPF). N-linked (GlcNAc...) asparagine glycosylation occurs at Asn5. The chain crosses the membrane as a helical span at residues 27 to 47 (LFGLFLFMYLVTLLGNLLIII). At 48–57 (ATITDSHLHT) the chain is on the cytoplasmic side. The chain crosses the membrane as a helical span at residues 58–78 (PMYFFLSNLSFADICFTSASI). Residues 79–97 (PKMLVNIQTKNKVITYEGC) are Extracellular-facing. A disulfide bridge links Cys97 with Cys179. Residues 98-118 (ISQVFFFILFGVLDNFLLAVM) form a helical membrane-spanning segment. The Cytoplasmic segment spans residues 119–139 (AYDRYVAICHPLHYMVIMNCR). A helical membrane pass occupies residues 140 to 160 (LCGFLVLGSWVTTALNSLLQS). Residues 161–196 (SMALRLSFCTDLKIPHFVCELNQLVLLACNDTFPND) lie on the Extracellular side of the membrane. The chain crosses the membrane as a helical span at residues 197 to 217 (MVMYFAAILLGGGPLAGILYS). Topologically, residues 218–244 (YSKIVSSIRAISSSQGKYKAFSTCASH) are cytoplasmic. The chain crosses the membrane as a helical span at residues 245-265 (LSVVSLFYSTLLGVYLSSSFT). At 266–269 (QNSH) the chain is on the extracellular side. The chain crosses the membrane as a helical span at residues 270–292 (STARASVMYSVVTPMLNPFIYSL). Topologically, residues 293–309 (RNKDLMGALRRLLRRKS) are cytoplasmic.

This sequence belongs to the G-protein coupled receptor 1 family.

The protein resides in the cell membrane. Its function is as follows. Odorant receptor. In Mus musculus (Mouse), this protein is Olfactory receptor 7A40.